A 116-amino-acid chain; its full sequence is Peptidyl-tRNA hydrolase (116 aa).

The protein belongs to the PTH2 family.

It is found in the cytoplasm. It catalyses the reaction an N-acyl-L-alpha-aminoacyl-tRNA + H2O = an N-acyl-L-amino acid + a tRNA + H(+). In terms of biological role, the natural substrate for this enzyme may be peptidyl-tRNAs which drop off the ribosome during protein synthesis. In Methanococcus vannielii (strain ATCC 35089 / DSM 1224 / JCM 13029 / OCM 148 / SB), this protein is Peptidyl-tRNA hydrolase.